The sequence spans 513 residues: ATP synthase subunit alpha (513 aa).

Residue Gly169–Thr176 coordinates ATP.

The protein belongs to the ATPase alpha/beta chains family. As to quaternary structure, F-type ATPases have 2 components, CF(1) - the catalytic core - and CF(0) - the membrane proton channel. CF(1) has five subunits: alpha(3), beta(3), gamma(1), delta(1), epsilon(1). CF(0) has three main subunits: a(1), b(2) and c(9-12). The alpha and beta chains form an alternating ring which encloses part of the gamma chain. CF(1) is attached to CF(0) by a central stalk formed by the gamma and epsilon chains, while a peripheral stalk is formed by the delta and b chains.

It localises to the cell inner membrane. The catalysed reaction is ATP + H2O + 4 H(+)(in) = ADP + phosphate + 5 H(+)(out). In terms of biological role, produces ATP from ADP in the presence of a proton gradient across the membrane. The alpha chain is a regulatory subunit. In Histophilus somni (strain 2336) (Haemophilus somnus), this protein is ATP synthase subunit alpha.